A 573-amino-acid polypeptide reads, in one-letter code: Urease subunit alpha 2 (573 aa).

Positions 135–573 (GGMDTHVHYI…ISLNQLYFFS (439 aa)) constitute a Urease domain. Positions 140, 142, and 223 each coordinate Ni(2+). Lys-223 carries the post-translational modification N6-carboxylysine. His-225 serves as a coordination point for substrate. Positions 252 and 278 each coordinate Ni(2+). Catalysis depends on His-326, which acts as the Proton donor. Residue Asp-366 participates in Ni(2+) binding.

Belongs to the metallo-dependent hydrolases superfamily. Urease alpha subunit family. Heterotrimer of UreA (gamma), UreB (beta) and UreC (alpha) subunits. Three heterotrimers associate to form the active enzyme. Requires Ni cation as cofactor. Carboxylation allows a single lysine to coordinate two nickel ions.

Its subcellular location is the cytoplasm. It catalyses the reaction urea + 2 H2O + H(+) = hydrogencarbonate + 2 NH4(+). It participates in nitrogen metabolism; urea degradation; CO(2) and NH(3) from urea (urease route): step 1/1. Its function is as follows. Disrupting the ure2 operon has no effect on urease activity or pathogen survival in BALB/c mice when administered orally. The sequence is that of Urease subunit alpha 2 from Brucella abortus (strain 2308).